The chain runs to 424 residues: MLEVVISDIQAREILDSRGYPTLYVKVTTDAGTFGEACVPSGASTGIKEALELRDQDSSRFQGKGVLQAVKNVKEVLLPVLQGISIFDQILIDSIMVEADGTPNKEKLGANAILGVSLASAKAAAATLGRSFYRYLGGCFAHVLPCPMMNLINGGMHANNGLQFQEFMIRPIGATSLKEAVRMGADVFHSLKNILNEKNLATGVGDEGGFAPQLKSNSEALDLLVLAIEKAGFQPGEDISLALDCAASSFYDTKAETYDGKSYEEQVNILADLCDRYPIDSIEDGLAEEDFDGWELLTAELGESIQIVGDDLFVTNPELIADGISRGLANAVLIKPNQIGTLTETSEAIQLAHSQGYTTILSHRSGETEDTTIADLAVAFNTGQIKTGSLSRSERIAKYNRLMAIEEELGPEGLFKDSNPFSGE.

Residue Gln165 coordinates (2R)-2-phosphoglycerate. Glu207 acts as the Proton donor in catalysis. Positions 244, 283, and 310 each coordinate Mg(2+). Residues Lys335, Arg364, Ser365, and Lys386 each contribute to the (2R)-2-phosphoglycerate site. The active-site Proton acceptor is Lys335.

Belongs to the enolase family. Mg(2+) serves as cofactor.

The protein resides in the cytoplasm. The protein localises to the secreted. Its subcellular location is the cell surface. The catalysed reaction is (2R)-2-phosphoglycerate = phosphoenolpyruvate + H2O. It functions in the pathway carbohydrate degradation; glycolysis; pyruvate from D-glyceraldehyde 3-phosphate: step 4/5. Functionally, catalyzes the reversible conversion of 2-phosphoglycerate (2-PG) into phosphoenolpyruvate (PEP). It is essential for the degradation of carbohydrates via glycolysis. This Chlamydia caviae (strain ATCC VR-813 / DSM 19441 / 03DC25 / GPIC) (Chlamydophila caviae) protein is Enolase.